A 69-amino-acid chain; its full sequence is A-kinase anchor protein inhibitor 1 (69 aa).

Positions Q39–K69 are disordered. The span at S41–D50 shows a compositional bias: basic and acidic residues.

In terms of assembly, binds cAMP-dependent protein kinase (PKA). Interacts specifically with RII-regulatory subunits of PKA (PRKAR2A and PRKAR2B). Preferentially expressed in the neural tissues.

In terms of biological role, protein kinase A (PKA)-binding protein. Binds to type II regulatory subunits of protein kinase A (PKA) and may block the A-kinase anchoring protein (AKAP)-mediated subcellular localization of PKA. The sequence is that of A-kinase anchor protein inhibitor 1 from Mus musculus (Mouse).